The primary structure comprises 552 residues: Chaperonin GroEL 3 (552 aa).

ATP contacts are provided by residues Thr-30–Pro-33, Lys-51, Asp-87–Thr-91, Gly-415, and Asp-495.

It belongs to the chaperonin (HSP60) family. In terms of assembly, forms a cylinder of 14 subunits composed of two heptameric rings stacked back-to-back. Interacts with the co-chaperonin GroES.

It is found in the cytoplasm. The catalysed reaction is ATP + H2O + a folded polypeptide = ADP + phosphate + an unfolded polypeptide.. In terms of biological role, together with its co-chaperonin GroES, plays an essential role in assisting protein folding. The GroEL-GroES system forms a nano-cage that allows encapsulation of the non-native substrate proteins and provides a physical environment optimized to promote and accelerate protein folding. This Mesorhizobium japonicum (strain LMG 29417 / CECT 9101 / MAFF 303099) (Mesorhizobium loti (strain MAFF 303099)) protein is Chaperonin GroEL 3.